The following is a 1243-amino-acid chain: ATP-dependent helicase/nuclease subunit A (1243 aa).

Positions Val2–Arg475 constitute a UvrD-like helicase ATP-binding domain. An ATP-binding site is contributed by Ala23–Thr30. In terms of domain architecture, UvrD-like helicase C-terminal spans Ala502–Gly803.

It belongs to the helicase family. AddA subfamily. In terms of assembly, heterodimer of AddA and AddB/RexB. It depends on Mg(2+) as a cofactor.

It carries out the reaction Couples ATP hydrolysis with the unwinding of duplex DNA by translocating in the 3'-5' direction.. The catalysed reaction is ATP + H2O = ADP + phosphate + H(+). Functionally, the heterodimer acts as both an ATP-dependent DNA helicase and an ATP-dependent, dual-direction single-stranded exonuclease. Recognizes the chi site generating a DNA molecule suitable for the initiation of homologous recombination. The AddA nuclease domain is required for chi fragment generation; this subunit has the helicase and 3' -&gt; 5' nuclease activities. This is ATP-dependent helicase/nuclease subunit A from Oceanobacillus iheyensis (strain DSM 14371 / CIP 107618 / JCM 11309 / KCTC 3954 / HTE831).